The following is a 458-amino-acid chain: Cysteine--tRNA ligase (458 aa).

Residue Cys27 participates in Zn(2+) binding. Positions Met29–His39 match the 'HIGH' region motif. Zn(2+) is bound by residues Cys208, His233, and Glu237. Residues Lys265 to Ser269 carry the 'KMSKS' region motif. Residue Lys268 participates in ATP binding.

Belongs to the class-I aminoacyl-tRNA synthetase family. Monomer. Requires Zn(2+) as cofactor.

Its subcellular location is the cytoplasm. It catalyses the reaction tRNA(Cys) + L-cysteine + ATP = L-cysteinyl-tRNA(Cys) + AMP + diphosphate. The polypeptide is Cysteine--tRNA ligase (Coxiella burnetii (strain Dugway 5J108-111)).